Consider the following 471-residue polypeptide: Desmin (471 aa).

A head region spans residues 2-109; the sequence is SQAYSSSQRV…QEFLTTRTNE (108 aa). The residue at position 7 (Ser7) is a Phosphoserine; by CDK1. Phosphoserine; by AURKB is present on Ser12. Arg16 is subject to Omega-N-methylarginine. Thr17 is modified (phosphothreonine; by AURKB and ROCK1). Position 28 is a phosphoserine; by CDK1 (Ser28). A Phosphoserine modification is found at Ser31. Ser32 is modified (phosphoserine; by CDK1). Asymmetric dimethylarginine; alternate is present on Arg37. Arg37 carries the post-translational modification Omega-N-methylarginine; alternate. Phosphoserine is present on Ser45. The residue at position 58 (Arg58) is an ADP-ribosylarginine. A Phosphoserine; by AURKB modification is found at Ser60. Arg70 is subject to Omega-N-methylarginine. At Thr77 the chain carries Phosphothreonine; by ROCK1. Ser81 bears the Phosphoserine mark. The IF rod domain occupies 109-417; the sequence is EKVELQELND…KLLEGEESRI (309 aa). Residues 110 to 142 form a coil 1A region; the sequence is KVELQELNDRFANYIEKVRFLEQQNAALAAEVN. Positions 143–152 are linker 1; that stretch reads RLKGREPTRV. The segment at 153–253 is coil 1B; the sequence is AEIYEEELRE…HEEEIRELQA (101 aa). Residues 254 to 269 are linker 12; it reads QLQEQQVQVEMDMSKP. Residues 269 to 416 are interaction with NEB; that stretch reads PDLTAALRDI…RKLLEGEESR (148 aa). A coil 2A region spans residues 270 to 288; it reads DLTAALRDIRAQYETIAAK. A linker 2 region spans residues 289-296; sequence NISEAEEW. Phosphoserine is present on residues Ser291, Ser359, Ser362, and Ser425. A coil 2B region spans residues 297 to 413; the sequence is YKSKVSDLTQ…ATYRKLLEGE (117 aa). The tail stretch occupies residues 414-471; sequence ESRINLPIQTFSALNFRETSPEQRGSEVHTKKTVMIKTIETRDGEVVSEATQQQHEVL. Residues 439-454 are interaction with CRYAB; sequence SEVHTKKTVMIKTIET.

Belongs to the intermediate filament family. Homomer. Interacts with DST. Interacts with MTM1. Interacts with EPPK1; interaction is dependent of higher-order structure of intermediate filament. Interacts with CRYAB. Interacts with NEB (via nebulin repeats 160-164). Interacts (via rod region) with NEBL (via nebulin repeats 1-5). Interacts with ASB2; the interaction targets DES for proteasomal degradation. Interacts with PKP1. Interacts with FLII. Post-translationally, ADP-ribosylation prevents ability to form intermediate filaments. Phosphorylation at Ser-7, Ser-28 and Ser-32 by CDK1 and phosphorylation at Ser-60 by AURKB contribute to efficient separation of desmin intermediate filaments during mitosis. In terms of processing, ubiquitination by a SCF-like complex containing ASB2 leads to proteasomal degradation.

The protein localises to the cytoplasm. The protein resides in the myofibril. Its subcellular location is the sarcomere. It is found in the z line. It localises to the cell membrane. The protein localises to the sarcolemma. The protein resides in the nucleus. Its subcellular location is the cell tip. It is found in the nucleus envelope. Functionally, muscle-specific type III intermediate filament essential for proper muscular structure and function. Plays a crucial role in maintaining the structure of sarcomeres, inter-connecting the Z-disks and forming the myofibrils, linking them not only to the sarcolemmal cytoskeleton, but also to the nucleus and mitochondria, thus providing strength for the muscle fiber during activity. In adult striated muscle they form a fibrous network connecting myofibrils to each other and to the plasma membrane from the periphery of the Z-line structures. May act as a sarcomeric microtubule-anchoring protein: specifically associates with detyrosinated tubulin-alpha chains, leading to buckled microtubules and mechanical resistance to contraction. Required for nuclear membrane integrity, via anchoring at the cell tip and nuclear envelope, resulting in maintenance of microtubule-derived intracellular mechanical forces. Contributes to the transcriptional regulation of the NKX2-5 gene in cardiac progenitor cells during a short period of cardiomyogenesis and in cardiac side population stem cells in the adult. Plays a role in maintaining an optimal conformation of nebulette (NEB) on heart muscle sarcomeres to bind and recruit cardiac alpha-actin. The polypeptide is Desmin (DES) (Sus scrofa (Pig)).